Consider the following 89-residue polypeptide: Small ribosomal subunit protein bS20 (89 aa).

Belongs to the bacterial ribosomal protein bS20 family.

Its function is as follows. Binds directly to 16S ribosomal RNA. In Wolbachia sp. subsp. Brugia malayi (strain TRS), this protein is Small ribosomal subunit protein bS20.